A 253-amino-acid polypeptide reads, in one-letter code: Ribosome maturation protein SBDS (253 aa).

The protein belongs to the SDO1/SBDS family. As to quaternary structure, associates with the 60S ribosomal subunit.

Its subcellular location is the cytoplasm. It localises to the nucleus. It is found in the nucleolus. The protein localises to the nucleoplasm. The protein resides in the cytoskeleton. Its subcellular location is the spindle. Functionally, required for the assembly of mature ribosomes and ribosome biogenesis. Together with K10C3.5b/EFL1, triggers the GTP-dependent release of ribosome maturation factors from 60S pre-ribosomes in the cytoplasm, thereby activating ribosomes for translation competence by allowing 80S ribosome assembly. Required for normal levels of protein synthesis. May play a role in cellular stress resistance. May play a role in cellular response to DNA damage. May play a role in cell proliferation. The protein is Ribosome maturation protein SBDS (sbds-1) of Caenorhabditis elegans.